Consider the following 331-residue polypeptide: Phosphatidylinositol transfer protein 4 (331 aa).

This sequence belongs to the PtdIns transfer protein family. PI transfer class IIA subfamily.

In terms of biological role, catalyzes the transfer of PtdIns and phosphatidylcholine between membranes. This chain is Phosphatidylinositol transfer protein 4 (pitD), found in Dictyostelium discoideum (Social amoeba).